The primary structure comprises 260 residues: Large ribosomal subunit protein uL2y (260 aa).

The disordered stretch occupies residues 227–248 (RRDKSAGAKVGQIAARRTGRRR).

The protein belongs to the universal ribosomal protein uL2 family.

In Arabidopsis thaliana (Mouse-ear cress), this protein is Large ribosomal subunit protein uL2y (RPL8B).